The primary structure comprises 195 residues: HTH-type transcriptional regulator BetI (195 aa).

In terms of domain architecture, HTH tetR-type spans Pro-8–Leu-68. Positions Ser-31–Phe-50 form a DNA-binding region, H-T-H motif.

It participates in amine and polyamine biosynthesis; betaine biosynthesis via choline pathway [regulation]. Repressor involved in the biosynthesis of the osmoprotectant glycine betaine. It represses transcription of the choline transporter BetT and the genes of BetAB involved in the synthesis of glycine betaine. This chain is HTH-type transcriptional regulator BetI, found in Pectobacterium carotovorum subsp. carotovorum (strain PC1).